Here is a 120-residue protein sequence, read N- to C-terminus: Large ribosomal subunit protein uL18 (120 aa).

This sequence belongs to the universal ribosomal protein uL18 family. Part of the 50S ribosomal subunit; part of the 5S rRNA/L5/L18/L25 subcomplex. Contacts the 5S and 23S rRNAs.

This is one of the proteins that bind and probably mediate the attachment of the 5S RNA into the large ribosomal subunit, where it forms part of the central protuberance. In Geobacillus sp. (strain WCH70), this protein is Large ribosomal subunit protein uL18.